We begin with the raw amino-acid sequence, 177 residues long: Small ribosomal subunit protein mS23 (177 aa).

Ala2 carries the post-translational modification N-acetylalanine. Position 83 is an N6-succinyllysine (Lys83). Lys102 carries the post-translational modification N6-acetyllysine. The interval 145–177 (LQASSEGHEPQEDDDLAQRGQVKQEPETAPSPP) is disordered.

The protein belongs to the mitochondrion-specific ribosomal protein mS23 family. As to quaternary structure, component of the mitochondrial ribosome small subunit (28S) which comprises a 12S rRNA and about 30 distinct proteins.

Its subcellular location is the mitochondrion. The chain is Small ribosomal subunit protein mS23 from Mus musculus (Mouse).